The primary structure comprises 421 residues: Subtilisin-like protease 2 (421 aa).

Positions 1 to 16 (MQLLNFGLLLLPFVAG) are cleaved as a signal peptide. Residues 17–122 (DLAPQPEPLL…VHPDQHVYLA (106 aa)) constitute a propeptide that is removed on maturation. The Inhibitor I9 domain occupies 36–122 (QYIVTLKEGL…VHPDQHVYLA (87 aa)). Positions 131–421 (RWGLGYMSSK…ERKFTLPKYY (291 aa)) constitute a Peptidase S8 domain. Active-site charge relay system residues include Asp-169 and His-201. N-linked (GlcNAc...) asparagine glycosylation is found at Asn-248, Asn-261, and Asn-348. Ser-357 functions as the Charge relay system in the catalytic mechanism. Asn-388 carries an N-linked (GlcNAc...) asparagine glycan.

Belongs to the peptidase S8 family.

It is found in the secreted. Secreted subtilisin-like serine protease with keratinolytic activity that contributes to pathogenicity. This Arthroderma benhamiae (strain ATCC MYA-4681 / CBS 112371) (Trichophyton mentagrophytes) protein is Subtilisin-like protease 2 (SUB2).